Reading from the N-terminus, the 1409-residue chain is Protein three rows (1409 aa).

The separase cleavage-site stretch occupies residues 1052 to 1058 (VEPIRKQ). 2 disordered regions span residues 1260-1284 (PIGC…SDHV) and 1297-1409 (DDAA…RQRN). 2 stretches are compositionally biased toward low complexity: residues 1264-1273 (SNSSSSSSKS) and 1300-1310 (ASVSASTPAPS).

In terms of assembly, interacts with pim and Sse. Cleavage of thr contributes to inactivation of Sse.

The protein localises to the cytoplasm. In terms of biological role, required specifically for chromosome disjunction during all mitoses; maternally provided protein is sufficient until mitosis 14 then zygotic protein is required. Involved in formation and/or maintenance of epithelial structures: bud extension during Malpighian tubule development, and foregut and hindgut morphogenesis. This chain is Protein three rows (thr), found in Drosophila pseudoobscura pseudoobscura (Fruit fly).